The primary structure comprises 817 residues: Protein-glutamine gamma-glutamyltransferase K (817 aa).

Disordered regions lie at residues 1–38 and 59–105; these read MMDGPRSDVGRWGGNPLQPPTTPSPEPEPEPDGRSRRG and DDWG…DGTI. Residues 1–100 are membrane anchorage region; that stretch reads MMDGPRSDVG…VSRGSGVNAA (100 aa). Residues 17–26 are compositionally biased toward pro residues; that stretch reads LQPPTTPSPE. Threonine 22 is modified (phosphothreonine). Serine 24, serine 68, serine 82, serine 85, serine 92, and serine 95 each carry phosphoserine. The span at 71–84 shows a compositional bias: low complexity; it reads RGSSSGTRRPGSRG. Catalysis depends on residues cysteine 377, histidine 436, and aspartate 459. Asparagine 499, aspartate 501, glutamate 548, and glutamate 553 together coordinate Ca(2+). The interval 793-817 is disordered; sequence GGFFSDAGGDSHLGETIPMASRGGA.

The protein belongs to the transglutaminase superfamily. Transglutaminase family. As to quaternary structure, interacts with PLAAT4. Ca(2+) serves as cofactor. Palmitoylated. Post-translationally, the membrane anchorage region possesses a cluster of five cysteines within which fatty acid(s) may become thioester-linked. It is subject to phorbol ester-stimulated phosphorylation and is hypersensitive to proteolysis, which releases the enzyme in a soluble form. In terms of processing, tyrosine-phosphorylated.

It is found in the membrane. The enzyme catalyses L-glutaminyl-[protein] + L-lysyl-[protein] = [protein]-L-lysyl-N(6)-5-L-glutamyl-[protein] + NH4(+). Catalyzes the cross-linking of proteins and the conjugation of polyamines to proteins. Responsible for cross-linking epidermal proteins during formation of the stratum corneum. Involved in cell proliferation. The protein is Protein-glutamine gamma-glutamyltransferase K (TGM1) of Homo sapiens (Human).